Here is a 658-residue protein sequence, read N- to C-terminus: Sulfate transporter 3.1 (658 aa).

Residues M1 to D85 lie on the Cytoplasmic side of the membrane. A helical transmembrane segment spans residues L86–L106. Residues A107–N108 are Extracellular-facing. A helical transmembrane segment spans residues L109–G129. The Cytoplasmic segment spans residues S130–D133. Residues L134–V154 form a helical membrane-spanning segment. At D155–Y163 the chain is on the extracellular side. The chain crosses the membrane as a helical span at residues L164–F184. Residue R185 is a topological domain, cytoplasmic. A helical membrane pass occupies residues L186–A206. Residues T207–W245 lie on the Extracellular side of the membrane. A helical membrane pass occupies residues E246 to I266. Residues K267–F271 lie on the Cytoplasmic side of the membrane. Residues F272–F292 traverse the membrane as a helical segment. Residues T293 to G332 are Extracellular-facing. The chain crosses the membrane as a helical span at residues L333–F353. The Cytoplasmic segment spans residues K354 to E363. The helical transmembrane segment at M364–G384 threads the bilayer. Topologically, residues P385–K398 are extracellular. A helical transmembrane segment spans residues T399 to P419. The Cytoplasmic segment spans residues L420–P425. Residues L426–A446 form a helical membrane-spanning segment. Topologically, residues I447–Y464 are extracellular. The chain crosses the membrane as a helical span at residues V465–A485. The Cytoplasmic portion of the chain corresponds to R486–V658. Residues Q513–C637 form the STAS domain.

The protein belongs to the SLC26A/SulP transporter (TC 2.A.53) family. Expressed only in leaves.

The protein resides in the membrane. Functionally, h(+)/sulfate cotransporter that may play a role in the regulation of sulfate assimilation. The protein is Sulfate transporter 3.1 (SULTR3;1) of Arabidopsis thaliana (Mouse-ear cress).